The sequence spans 258 residues: MLAKRIIPCLDVRDGQVVKGVQFRNHEIIGDIVPLAKRYAEEGADELVFYDITASSDGRVVDKSWVSRVAEVIDIPFCVAGGIKSLEDAAKILSFGADKISINSPALADPTLITRLADRFGVQCIVVGIDTWYDAETGKYHVNQYTGDESRTRVTQWETLDWVEEVQKRGAGEIVLNMMNQDGVCNGYDLKQLKKVREVCHVPLIASGGAGTMEHFLEAFRDADVDGALAASVFHKQIINIGELKAYLATQGVEIRIC.

Residues Asp-11 and Asp-130 contribute to the active site.

It belongs to the HisA/HisF family. In terms of assembly, heterodimer of HisH and HisF.

The protein localises to the cytoplasm. The catalysed reaction is 5-[(5-phospho-1-deoxy-D-ribulos-1-ylimino)methylamino]-1-(5-phospho-beta-D-ribosyl)imidazole-4-carboxamide + L-glutamine = D-erythro-1-(imidazol-4-yl)glycerol 3-phosphate + 5-amino-1-(5-phospho-beta-D-ribosyl)imidazole-4-carboxamide + L-glutamate + H(+). It functions in the pathway amino-acid biosynthesis; L-histidine biosynthesis; L-histidine from 5-phospho-alpha-D-ribose 1-diphosphate: step 5/9. IGPS catalyzes the conversion of PRFAR and glutamine to IGP, AICAR and glutamate. The HisF subunit catalyzes the cyclization activity that produces IGP and AICAR from PRFAR using the ammonia provided by the HisH subunit. The chain is Imidazole glycerol phosphate synthase subunit HisF from Shigella flexneri serotype 5b (strain 8401).